Here is a 118-residue protein sequence, read N- to C-terminus: Large ribosomal subunit protein bL20 (118 aa).

It belongs to the bacterial ribosomal protein bL20 family.

Functionally, binds directly to 23S ribosomal RNA and is necessary for the in vitro assembly process of the 50S ribosomal subunit. It is not involved in the protein synthesizing functions of that subunit. This is Large ribosomal subunit protein bL20 from Staphylococcus carnosus (strain TM300).